The primary structure comprises 64 residues: U2-aranetoxin-Av1a (64 aa).

Expressed in fat body, but not in cephalothorax, silk gland, midgut.

Functionally, insecticidal toxin. This chain is U2-aranetoxin-Av1a, found in Araneus ventricosus (Orbweaver spider).